The sequence spans 272 residues: MPELPEVETVRAGLTPHLTGRQIKAVTVREPRLRWPVDPDLSAKLAGLEVRTVERRAKYLLIGFGHEQWLIVHLGMSGSVRVLPDDTPPQKHDHLDFILDDGHLVRYHDPRRFGAVLWHLGPPDSHPLLSRLGPEPLSDGFDATGLLHALAGRRQALKVALMDNAVVVGVGNIYANESLFEAGLDPRRPALSLTADEAGQLVQSVRHTLARAIAAGGSTLRDFRDAIGKPGYFQQDYAVYGRQGQSCPRCGGLVERCRLGQRSTFFCPACQR.

P2 functions as the Schiff-base intermediate with DNA in the catalytic mechanism. The Proton donor role is filled by E3. Catalysis depends on K58, which acts as the Proton donor; for beta-elimination activity. Residues H92, R111, and R153 each coordinate DNA. An FPG-type zinc finger spans residues 238–272; that stretch reads AVYGRQGQSCPRCGGLVERCRLGQRSTFFCPACQR. R262 functions as the Proton donor; for delta-elimination activity in the catalytic mechanism.

It belongs to the FPG family. In terms of assembly, monomer. It depends on Zn(2+) as a cofactor.

The enzyme catalyses Hydrolysis of DNA containing ring-opened 7-methylguanine residues, releasing 2,6-diamino-4-hydroxy-5-(N-methyl)formamidopyrimidine.. It carries out the reaction 2'-deoxyribonucleotide-(2'-deoxyribose 5'-phosphate)-2'-deoxyribonucleotide-DNA = a 3'-end 2'-deoxyribonucleotide-(2,3-dehydro-2,3-deoxyribose 5'-phosphate)-DNA + a 5'-end 5'-phospho-2'-deoxyribonucleoside-DNA + H(+). Involved in base excision repair of DNA damaged by oxidation or by mutagenic agents. Acts as a DNA glycosylase that recognizes and removes damaged bases. Has a preference for oxidized purines, such as 7,8-dihydro-8-oxoguanine (8-oxoG). Has AP (apurinic/apyrimidinic) lyase activity and introduces nicks in the DNA strand. Cleaves the DNA backbone by beta-delta elimination to generate a single-strand break at the site of the removed base with both 3'- and 5'-phosphates. The protein is Formamidopyrimidine-DNA glycosylase of Laribacter hongkongensis (strain HLHK9).